The chain runs to 494 residues: DnaJ homolog subfamily C member 7 (494 aa).

Alanine 2 bears the N-acetylalanine mark. 8 TPR repeats span residues 28 to 61 (AESF…CPNN), 62 to 95 (ASYY…DDSF), 96 to 129 (VRGH…DHKN), 142 to 175 (VMEY…APAC), 210 to 243 (ADAL…APDH), 256 to 289 (LKAK…DPNN), 294 to 327 (AKLY…DDTY), and 328 to 361 (IKAY…EKTK). Positions 381 to 451 (DYYKILGVDK…KKKTRYDSGQ (71 aa)) constitute a J domain. Phosphoserine is present on serine 393.

In terms of assembly, associates with complexes containing chaperones HSP70 and HSP90. Interacts with the GAP domain of NF1. Interacts with HSP90AA1. Interacts with HSPA1A/B; the interaction is enhanced by ATP. Interacts with HSP90AB1. Interacts with PGR. Interacts with RAD9A; the interaction is interrupted by UV and heat shock treatments. Interacts with HUS1 and RAD1. Interacts with NR1I3; this complex may also include HSP90 Interacts with HSPA8. Widely expressed with high levels in liver, skeletal muscle, kidney and testis.

It localises to the cytoplasm. The protein localises to the nucleus. It is found in the cytoskeleton. Its function is as follows. Acts as a co-chaperone regulating the molecular chaperones HSP70 and HSP90 in folding of steroid receptors, such as the glucocorticoid receptor and the progesterone receptor. Proposed to act as a recycling chaperone by facilitating the return of chaperone substrates to early stages of chaperoning if further folding is required. In vitro, induces ATP-independent dissociation of HSP90 but not of HSP70 from the chaperone-substrate complexes. Recruits NR1I3 to the cytoplasm. The polypeptide is DnaJ homolog subfamily C member 7 (Dnajc7) (Mus musculus (Mouse)).